The primary structure comprises 247 residues: Retbindin (247 aa).

The N-terminal stretch at 1–31 is a signal peptide; it reads MAHEGHSQHSGLVWALRPILAWIFLVACGWS. 4 disulfides stabilise this stretch: Cys-99-Cys-169, Cys-106-Cys-146, Cys-139-Cys-183, and Cys-152-Cys-165.

This sequence belongs to the folate receptor family. Post-translationally, not N-glycosylated. Expressed in the peripheral retina where it localizes to the inter-photoreceptor matrix (at protein level). May be produced by rod photoreceptors (at protein level).

The protein localises to the secreted. Its subcellular location is the extracellular space. The protein resides in the extracellular matrix. It localises to the interphotoreceptor matrix. It is found in the cell membrane. Its function is as follows. Riboflavin-binding protein which might have a role in retinal flavin transport. The sequence is that of Retbindin (Rtbdn) from Mus musculus (Mouse).